Consider the following 550-residue polypeptide: Hydroxylamine reductase (550 aa).

The [4Fe-4S] cluster site is built by C5, C8, C17, and C23. Hybrid [4Fe-2O-2S] cluster is bound by residues H250, E274, C319, C405, C433, C458, E492, and K494. C405 is modified (cysteine persulfide).

This sequence belongs to the HCP family. Requires [4Fe-4S] cluster as cofactor. It depends on hybrid [4Fe-2O-2S] cluster as a cofactor.

The protein resides in the cytoplasm. The enzyme catalyses A + NH4(+) + H2O = hydroxylamine + AH2 + H(+). Its function is as follows. Catalyzes the reduction of hydroxylamine to form NH(3) and H(2)O. This is Hydroxylamine reductase from Geobacter sulfurreducens (strain ATCC 51573 / DSM 12127 / PCA).